The following is a 228-amino-acid chain: Cytidylate kinase (228 aa).

17–25 (GPTASGKGT) lines the ATP pocket.

This sequence belongs to the cytidylate kinase family. Type 1 subfamily.

It localises to the cytoplasm. It catalyses the reaction CMP + ATP = CDP + ADP. The enzyme catalyses dCMP + ATP = dCDP + ADP. The polypeptide is Cytidylate kinase (Paraburkholderia phymatum (strain DSM 17167 / CIP 108236 / LMG 21445 / STM815) (Burkholderia phymatum)).